We begin with the raw amino-acid sequence, 515 residues long: MSEVKNRVCLVVIDGWGISNESKGNAILNAKTPVMDELCALNSHPIEAHGLHVGLPEGLMGNSEVGHLNIGAGRVVYQDIVRINLAVKNKTLVENKHLKEAAERAIKGNGRIHLCGLVSDGGVHSHIDHLFALITALKQLKVPQLYIHFFGDGRDTSPTSGVGFLQQLIDFVNKEQYGEIATIVGRYYAMDRDKRWERIRVCYDALIAGVGEKTTIDKAIDVIKGRYAKDETDEFLKPIILSDKGRTKDGDTLIFFDYRADRMREITECMGMERYKDLKSDIKHPKDMQVIGMTQYKAEFTFPALFPPESHKNVLAEWLSVKGLTQFHCAETEKYAHVTFFFNGGVEKQFENEERCLVPSPKVATYDLEPAMSSAGVADKMIEQLNRKAHAFIMCNFAPPDMVGHTGVYEAAVKAVEATDIAIGRIYEACKKNDYVLMVTADHGNAEKMIAPDGGKHTAHTCNLVPFTCSSLKFKFMDKLPDREMALCDVAPTVLKVLGLPLPSEMTGKPVVIEV.

Mn(2+) contacts are provided by aspartate 14 and serine 63. Serine 63 is an active-site residue. Substrate is bound by residues histidine 124, 154-155 (RD), arginine 186, arginine 192, 259-262 (RADR), and lysine 334. Mn(2+) is bound by residues aspartate 401, histidine 405, aspartate 442, histidine 443, and histidine 460.

It belongs to the BPG-independent phosphoglycerate mutase family. The cofactor is Mg(2+). Mn(2+) serves as cofactor.

The catalysed reaction is (2R)-2-phosphoglycerate = (2R)-3-phosphoglycerate. Its pathway is carbohydrate degradation; glycolysis; pyruvate from D-glyceraldehyde 3-phosphate: step 3/5. Its activity is regulated as follows. Activity is not affected by 2,3-bisphosphoglycerate. Functionally, catalyzes the interconversion of 2-phosphoglycerate and 3-phosphoglycerate. In Onchocerca volvulus, this protein is 2,3-bisphosphoglycerate-independent phosphoglycerate mutase.